The sequence spans 224 residues: Probable amino-acid permease protein YxeN (224 aa).

Helical transmembrane passes span 3–23 (TIDWEFMISAFPTLIQALPIT), 24–44 (LFMAIAAMIFAIIGGLILALI), 58–78 (LYISFFRGVPTLVQLFLIYYG), 91–111 (ALTAAIIGLSLKNAAYLAEIF), 157–177 (FIGLLKETSLAFTLGVMEMFA), and 190–210 (FETYLAVAIVYWVLTIIYSIL). The region spanning 20–211 (LPITLFMAIA…VLTIIYSILQ (192 aa)) is the ABC transmembrane type-1 domain.

The protein belongs to the binding-protein-dependent transport system permease family. The complex is composed of two ATP-binding proteins (YxeO), two transmembrane proteins (YxeN) and a solute-binding protein (YxeM).

It localises to the cell membrane. Functionally, probably part of the ABC transporter complex YxeMNO that could be involved in amino-acid import. May transport S-methylcysteine. Probably responsible for the translocation of the substrate across the membrane. This is Probable amino-acid permease protein YxeN (yxeN) from Bacillus subtilis (strain 168).